Here is an 86-residue protein sequence, read N- to C-terminus: MNYENLDKFMNFLKENVKIVRVGVVFDALKHDKRFKEFVGVKKLRKSAIYNYSQRGIILGKGSLVVYDPDEVRRIADNFFKDSIRS.

This is an uncharacterized protein from Acidianus bottle-shaped virus (isolate Italy/Pozzuoli) (ABV).